The chain runs to 71 residues: Large ribosomal subunit protein bL31 (71 aa).

Zn(2+)-binding residues include Cys-16, Cys-18, Cys-37, and Cys-40.

Belongs to the bacterial ribosomal protein bL31 family. Type A subfamily. As to quaternary structure, part of the 50S ribosomal subunit. It depends on Zn(2+) as a cofactor.

Its function is as follows. Binds the 23S rRNA. The chain is Large ribosomal subunit protein bL31 from Pseudoalteromonas translucida (strain TAC 125).